The following is a 166-amino-acid chain: ATP synthase subunit b (166 aa).

A helical membrane pass occupies residues 27 to 47; sequence FFVVLLIFLIVLGVIAKWVVP. Positions 124–143 are disordered; sequence SADQQLSQQGSAAQSELQSS.

Belongs to the ATPase B chain family. In terms of assembly, F-type ATPases have 2 components, F(1) - the catalytic core - and F(0) - the membrane proton channel. F(1) has five subunits: alpha(3), beta(3), gamma(1), delta(1), epsilon(1). F(0) has three main subunits: a(1), b(2) and c(10-14). The alpha and beta chains form an alternating ring which encloses part of the gamma chain. F(1) is attached to F(0) by a central stalk formed by the gamma and epsilon chains, while a peripheral stalk is formed by the delta and b chains.

It localises to the cell membrane. F(1)F(0) ATP synthase produces ATP from ADP in the presence of a proton or sodium gradient. F-type ATPases consist of two structural domains, F(1) containing the extramembraneous catalytic core and F(0) containing the membrane proton channel, linked together by a central stalk and a peripheral stalk. During catalysis, ATP synthesis in the catalytic domain of F(1) is coupled via a rotary mechanism of the central stalk subunits to proton translocation. In terms of biological role, component of the F(0) channel, it forms part of the peripheral stalk, linking F(1) to F(0). In Mycolicibacterium vanbaalenii (strain DSM 7251 / JCM 13017 / BCRC 16820 / KCTC 9966 / NRRL B-24157 / PYR-1) (Mycobacterium vanbaalenii), this protein is ATP synthase subunit b.